Consider the following 145-residue polypeptide: Cystin-1 (145 aa).

Residues 1–129 (MGSGSSRSGR…PEGQSAISYD (129 aa)) form a disordered region. A lipid anchor (N-myristoyl glycine) is attached at G2. A Ciliary targeting motif motif is present at residues 29 to 33 (ASEGG). At S116 the chain carries Phosphoserine.

In terms of assembly, interacts (when myristoylated) with UNC119 and UNC119B; interaction is required for localization to cilium. Expressed primarily in the kidney and liver. Expressed at lower levels in the lung, brain and heart.

The protein resides in the cell projection. It localises to the cilium membrane. The protein localises to the cytoplasm. Its subcellular location is the cytoskeleton. It is found in the cilium axoneme. In Mus musculus (Mouse), this protein is Cystin-1 (Cys1).